The following is a 498-amino-acid chain: Tryptophan decarboxylase TDC2 (498 aa).

Lys316 bears the N6-(pyridoxal phosphate)lysine mark.

This sequence belongs to the group II decarboxylase family. The cofactor is pyridoxal 5'-phosphate.

It catalyses the reaction L-tryptophan + H(+) = tryptamine + CO2. Involved in the biosynthesis of tryptamine. Supplies tryptamine for the indole moiety of camptothecin (CPT), an anti-cancer monoterpene alkaloid. Represents a key step in monoterpene indole alkaloid biosynthesis. Is specific for tryptophan, and inactive against tyrosine, phenylalanine and 3,4-dihydroxyphenylalanine (dopa). The chain is Tryptophan decarboxylase TDC2 from Camptotheca acuminata (Happy tree).